We begin with the raw amino-acid sequence, 413 residues long: Multifunctional CCA protein (413 aa).

Residues Gly8 and Arg11 each coordinate ATP. Residues Gly8 and Arg11 each contribute to the CTP site. Positions 21 and 23 each coordinate Mg(2+). 3 residues coordinate ATP: Arg91, Arg137, and Arg140. 3 residues coordinate CTP: Arg91, Arg137, and Arg140. Positions 228 to 329 (TGVHTLMTLS…VKLFDAIDAW (102 aa)) constitute an HD domain.

This sequence belongs to the tRNA nucleotidyltransferase/poly(A) polymerase family. Bacterial CCA-adding enzyme type 1 subfamily. Monomer. Can also form homodimers and oligomers. Mg(2+) is required as a cofactor. Requires Ni(2+) as cofactor.

It carries out the reaction a tRNA precursor + 2 CTP + ATP = a tRNA with a 3' CCA end + 3 diphosphate. The enzyme catalyses a tRNA with a 3' CCA end + 2 CTP + ATP = a tRNA with a 3' CCACCA end + 3 diphosphate. Its function is as follows. Catalyzes the addition and repair of the essential 3'-terminal CCA sequence in tRNAs without using a nucleic acid template. Adds these three nucleotides in the order of C, C, and A to the tRNA nucleotide-73, using CTP and ATP as substrates and producing inorganic pyrophosphate. tRNA 3'-terminal CCA addition is required both for tRNA processing and repair. Also involved in tRNA surveillance by mediating tandem CCA addition to generate a CCACCA at the 3' terminus of unstable tRNAs. While stable tRNAs receive only 3'-terminal CCA, unstable tRNAs are marked with CCACCA and rapidly degraded. The protein is Multifunctional CCA protein of Salmonella paratyphi A (strain ATCC 9150 / SARB42).